Consider the following 600-residue polypeptide: DNA mismatch repair protein MutL (600 aa).

It belongs to the DNA mismatch repair MutL/HexB family.

Functionally, this protein is involved in the repair of mismatches in DNA. It is required for dam-dependent methyl-directed DNA mismatch repair. May act as a 'molecular matchmaker', a protein that promotes the formation of a stable complex between two or more DNA-binding proteins in an ATP-dependent manner without itself being part of a final effector complex. This Sinorhizobium fredii (strain NBRC 101917 / NGR234) protein is DNA mismatch repair protein MutL.